Consider the following 350-residue polypeptide: uncharacterized protein (350 aa).

One can recognise an Integrase catalytic domain in the interval 164–327 (NDPLPGYVEV…EKTRIGARVV (164 aa)).

This is an uncharacterized protein from Sinorhizobium fredii (strain NBRC 101917 / NGR234).